Reading from the N-terminus, the 435-residue chain is Actin-like protein 7A (435 aa).

Disordered regions lie at residues methionine 1–glutamine 20 and glutamine 29–lysine 65. A required for interaction with TES region spans residues alanine 31–proline 51. A compositionally biased stretch (basic and acidic residues) spans arginine 47 to lysine 65.

It belongs to the actin family. As to quaternary structure, interacts (via N-terminus) with TES (via LIM domain 2). Heterodimer with TES; the heterodimer interacts with ENAH to form a heterotrimer. Interacts with ACTL9. Interacts with CYLC1; the interaction may be relevant for proper acrosome attachment to the nuclear envelope.

Its subcellular location is the cytoplasm. It localises to the cytoskeleton. The protein resides in the golgi apparatus. The protein localises to the nucleus. Essential for normal spermatogenesis and male fertility. Required for normal sperm head morphology, acroplaxome formation, acrosome attachment, and acrosome granule stability. May anchor and stabilize acrosomal adherence to the acroplaxome at least in part by facilitating the presence of F-actin in the subacrosomal space. May play an important role in formation and fusion of Golgi-derived vesicles during acrosome biogenesis. The polypeptide is Actin-like protein 7A (ACTL7A) (Macaca fascicularis (Crab-eating macaque)).